A 378-amino-acid chain; its full sequence is Outer membrane protein (378 aa).

The N-terminal stretch at 1-22 (MRLRTALLATTLMAAAPVAANA) is a signal peptide. The OmpA-like domain maps to 258–378 (PPAPTPARTY…QNRRVEIILH (121 aa)).

Its subcellular location is the cell outer membrane. Functionally, growth enhancer. The protein is Outer membrane protein of Gluconacetobacter diazotrophicus (strain ATCC 49037 / DSM 5601 / CCUG 37298 / CIP 103539 / LMG 7603 / PAl5).